A 74-amino-acid polypeptide reads, in one-letter code: ATP synthase subunit c (74 aa).

The next 2 membrane-spanning stretches (helical) occupy residues 8 to 28 (FIGI…VSNI) and 52 to 72 (IGAG…MLLI).

Belongs to the ATPase C chain family. As to quaternary structure, F-type ATPases have 2 components, F(1) - the catalytic core - and F(0) - the membrane proton channel. F(1) has five subunits: alpha(3), beta(3), gamma(1), delta(1), epsilon(1). F(0) has three main subunits: a(1), b(2) and c(10-14). The alpha and beta chains form an alternating ring which encloses part of the gamma chain. F(1) is attached to F(0) by a central stalk formed by the gamma and epsilon chains, while a peripheral stalk is formed by the delta and b chains.

Its subcellular location is the cell inner membrane. F(1)F(0) ATP synthase produces ATP from ADP in the presence of a proton or sodium gradient. F-type ATPases consist of two structural domains, F(1) containing the extramembraneous catalytic core and F(0) containing the membrane proton channel, linked together by a central stalk and a peripheral stalk. During catalysis, ATP synthesis in the catalytic domain of F(1) is coupled via a rotary mechanism of the central stalk subunits to proton translocation. Its function is as follows. Key component of the F(0) channel; it plays a direct role in translocation across the membrane. A homomeric c-ring of between 10-14 subunits forms the central stalk rotor element with the F(1) delta and epsilon subunits. In Rickettsia akari (strain Hartford), this protein is ATP synthase subunit c.